The primary structure comprises 331 residues: Protein FLX-like 1 (331 aa).

Positions 1-51 (MSGRNRGPPPPSMKGGSYSGLQAPVHQPPFVRGLGGGPVPPPPHPSMIDDS) are disordered. Positions 69-252 (ILEDRLAAQN…AEIANSETSA (184 aa)) form a coiled coil. The span at 306–321 (QAAWAGGYDPQQQQQQ) shows a compositional bias: low complexity. The tract at residues 306–331 (QAAWAGGYDPQQQQQQQPPPQGQGHR) is disordered. Residues 322–331 (QPPPQGQGHR) show a composition bias toward pro residues.

Belongs to the FLX family. In terms of assembly, interacts with FRI.

Functionally, has no transcriptional activation activity. In Arabidopsis thaliana (Mouse-ear cress), this protein is Protein FLX-like 1 (FLXL1).